The primary structure comprises 209 residues: Chalcone isomerase-like protein 2 (209 aa).

It belongs to the chalcone isomerase family. Component an active demethylxanthohumol (DMX) biosynthetic metabolon in glandular trichomes (lupulin glands) that encompasses a chalcone synthase (CHS) and a membrane-bound prenyltransferase. Interacts with CHS_H1 and PT1L. As to expression, mostly expressed in glandular trichomes (lupulin glands), and, to a lower extent, in cones, cones bracts, leaves, stems and roots.

It is found in the cytoplasm. The catalysed reaction is a chalcone = a flavanone.. It participates in secondary metabolite biosynthesis; flavonoid biosynthesis. Its function is as follows. Involved in the biosynthesis of prenylated phenolics natural products which contribute to the bitter taste of beer and display broad biological activities. Involved in anthocyanin biosynthesis. Polyketide binding proteins (PBP) which promotes the catalytic activities of CHS_H1 and PT1L and triggers demethylxanthohumol (DMX) production. This chain is Chalcone isomerase-like protein 2, found in Humulus lupulus (European hop).